Consider the following 319-residue polypeptide: Acetyl-coenzyme A carboxylase carboxyl transferase subunit alpha (319 aa).

The 262-residue stretch at 35 to 296 folds into the CoA carboxyltransferase C-terminal domain; sequence DLDKEIEQLE…KATLVANLAE (262 aa).

It belongs to the AccA family. In terms of assembly, acetyl-CoA carboxylase is a heterohexamer composed of biotin carboxyl carrier protein (AccB), biotin carboxylase (AccC) and two subunits each of ACCase subunit alpha (AccA) and ACCase subunit beta (AccD).

The protein localises to the cytoplasm. It carries out the reaction N(6)-carboxybiotinyl-L-lysyl-[protein] + acetyl-CoA = N(6)-biotinyl-L-lysyl-[protein] + malonyl-CoA. It participates in lipid metabolism; malonyl-CoA biosynthesis; malonyl-CoA from acetyl-CoA: step 1/1. Its function is as follows. Component of the acetyl coenzyme A carboxylase (ACC) complex. First, biotin carboxylase catalyzes the carboxylation of biotin on its carrier protein (BCCP) and then the CO(2) group is transferred by the carboxyltransferase to acetyl-CoA to form malonyl-CoA. This Photobacterium profundum (strain SS9) protein is Acetyl-coenzyme A carboxylase carboxyl transferase subunit alpha.